The chain runs to 742 residues: Phosphoribosylformylglycinamidine synthase subunit PurL (742 aa).

H50 is a catalytic residue. ATP-binding residues include Y53 and K92. Residue E94 coordinates Mg(2+). Substrate-binding positions include 95 to 98 (SHNH) and R117. The active-site Proton acceptor is H96. D118 contacts Mg(2+). Q241 lines the substrate pocket. D269 is a binding site for Mg(2+). Position 313 to 315 (313 to 315 (ESQ)) interacts with substrate. 2 residues coordinate ATP: D494 and G531. Residue N532 participates in Mg(2+) binding. Position 534 (S534) interacts with substrate.

It belongs to the FGAMS family. Monomer. Part of the FGAM synthase complex composed of 1 PurL, 1 PurQ and 2 PurS subunits.

The protein localises to the cytoplasm. It catalyses the reaction N(2)-formyl-N(1)-(5-phospho-beta-D-ribosyl)glycinamide + L-glutamine + ATP + H2O = 2-formamido-N(1)-(5-O-phospho-beta-D-ribosyl)acetamidine + L-glutamate + ADP + phosphate + H(+). It participates in purine metabolism; IMP biosynthesis via de novo pathway; 5-amino-1-(5-phospho-D-ribosyl)imidazole from N(2)-formyl-N(1)-(5-phospho-D-ribosyl)glycinamide: step 1/2. Part of the phosphoribosylformylglycinamidine synthase complex involved in the purines biosynthetic pathway. Catalyzes the ATP-dependent conversion of formylglycinamide ribonucleotide (FGAR) and glutamine to yield formylglycinamidine ribonucleotide (FGAM) and glutamate. The FGAM synthase complex is composed of three subunits. PurQ produces an ammonia molecule by converting glutamine to glutamate. PurL transfers the ammonia molecule to FGAR to form FGAM in an ATP-dependent manner. PurS interacts with PurQ and PurL and is thought to assist in the transfer of the ammonia molecule from PurQ to PurL. The protein is Phosphoribosylformylglycinamidine synthase subunit PurL of Sinorhizobium fredii (strain NBRC 101917 / NGR234).